The primary structure comprises 150 residues: 3-dehydroquinate dehydratase (150 aa).

The active-site Proton acceptor is the Tyr-25. Residues Asn-76, His-82, and Asp-89 each coordinate substrate. His-102 acts as the Proton donor in catalysis. Residues 103 to 104 (LS) and Arg-113 each bind substrate.

It belongs to the type-II 3-dehydroquinase family. Homododecamer.

It carries out the reaction 3-dehydroquinate = 3-dehydroshikimate + H2O. The protein operates within metabolic intermediate biosynthesis; chorismate biosynthesis; chorismate from D-erythrose 4-phosphate and phosphoenolpyruvate: step 3/7. In terms of biological role, catalyzes a trans-dehydration via an enolate intermediate. This is 3-dehydroquinate dehydratase from Trichodesmium erythraeum (strain IMS101).